Here is a 273-residue protein sequence, read N- to C-terminus: Tetraspanin-8 (273 aa).

The Cytoplasmic portion of the chain corresponds to Met-1–Asn-7. Residues Leu-8–Ile-28 form a helical membrane-spanning segment. Residues Trp-29 to Pro-45 are Extracellular-facing. Residues Val-46 to Cys-66 form a helical membrane-spanning segment. The Cytoplasmic portion of the chain corresponds to Arg-67–Tyr-75. The chain crosses the membrane as a helical span at residues Leu-76–Val-96. Residues Thr-97 to Ala-235 lie on the Extracellular side of the membrane. The N-linked (GlcNAc...) asparagine glycan is linked to Asn-192. Residues Ile-236–Phe-256 form a helical membrane-spanning segment. Topologically, residues Arg-257–Pro-273 are cytoplasmic.

The protein belongs to the tetraspanin (TM4SF) family.

The protein resides in the membrane. Functionally, may be involved in the regulation of cell differentiation. The protein is Tetraspanin-8 (TET8) of Arabidopsis thaliana (Mouse-ear cress).